Reading from the N-terminus, the 31-residue chain is Cytochrome b6-f complex subunit 6 (31 aa).

The helical transmembrane segment at 4-24 threads the bilayer; that stretch reads ITSYFGFLLAALTITSALFIG.

Belongs to the PetL family. In terms of assembly, the 4 large subunits of the cytochrome b6-f complex are cytochrome b6, subunit IV (17 kDa polypeptide, PetD), cytochrome f and the Rieske protein, while the 4 small subunits are PetG, PetL, PetM and PetN. The complex functions as a dimer.

The protein resides in the plastid. Its subcellular location is the chloroplast thylakoid membrane. Its function is as follows. Component of the cytochrome b6-f complex, which mediates electron transfer between photosystem II (PSII) and photosystem I (PSI), cyclic electron flow around PSI, and state transitions. PetL is important for photoautotrophic growth as well as for electron transfer efficiency and stability of the cytochrome b6-f complex. This chain is Cytochrome b6-f complex subunit 6, found in Humulus lupulus (European hop).